The primary structure comprises 239 residues: Ribosomal RNA small subunit methyltransferase G (239 aa).

Residues Gly77, Phe82, 128-129, and Arg147 contribute to the S-adenosyl-L-methionine site; that span reads AE. Residues 215 to 239 are disordered; that stretch reads IRKTKSTPKKYPRKPGTPNKSPIEG. Basic residues predominate over residues 216–227; that stretch reads RKTKSTPKKYPR.

This sequence belongs to the methyltransferase superfamily. RNA methyltransferase RsmG family.

It is found in the cytoplasm. Its function is as follows. Specifically methylates the N7 position of guanine in position 535 of 16S rRNA. This chain is Ribosomal RNA small subunit methyltransferase G, found in Bacillus velezensis (strain DSM 23117 / BGSC 10A6 / LMG 26770 / FZB42) (Bacillus amyloliquefaciens subsp. plantarum).